The primary structure comprises 560 residues: DNA ligase B (560 aa).

Residue Lys-124 is the N6-AMP-lysine intermediate of the active site.

The protein belongs to the NAD-dependent DNA ligase family. LigB subfamily.

It carries out the reaction NAD(+) + (deoxyribonucleotide)n-3'-hydroxyl + 5'-phospho-(deoxyribonucleotide)m = (deoxyribonucleotide)n+m + AMP + beta-nicotinamide D-nucleotide.. Functionally, catalyzes the formation of phosphodiester linkages between 5'-phosphoryl and 3'-hydroxyl groups in double-stranded DNA using NAD as a coenzyme and as the energy source for the reaction. In Shigella flexneri serotype 5b (strain 8401), this protein is DNA ligase B.